A 183-amino-acid polypeptide reads, in one-letter code: Capsid protein (183 aa).

The segment at 136–183 is disordered; sequence NAPILSTLPETTVVRRRGRSPRRRTPSPRRRRSQSPRRRRSQSRESQC. The segment covering 149–176 has biased composition (basic residues); the sequence is VRRRGRSPRRRTPSPRRRRSQSPRRRRS. A phosphoserine; by host mark is found at S155, S162, and S170. A 1; half-length repeat occupies 155–161; it reads SPRRRTP. The 3 X 8 AA repeats of S-P-R-R-R-[PR]-S-Q stretch occupies residues 155–177; that stretch reads SPRRRTPSPRRRRSQSPRRRRSQ. The short motif at 158–175 is the Bipartite nuclear localization signal element; it reads RRTPSPRRRRSQSPRRRR. A run of 2 repeats spans residues 162–169 and 170–177. The interval 177–183 is RNA binding; that stretch reads QSRESQC.

Belongs to the orthohepadnavirus core antigen family. As to quaternary structure, homodimerizes, then multimerizes. Interacts with cytosol exposed regions of viral L glycoprotein present in the reticulum-to-Golgi compartment. Interacts with human FLNB. Phosphorylated form interacts with host importin alpha; this interaction depends on the exposure of the NLS, which itself depends upon genome maturation and/or phosphorylation of the capsid protein. Interacts with host NUP153. Phosphorylated by host SRPK1, SRPK2, and maybe protein kinase C or GAPDH. Phosphorylation is critical for pregenomic RNA packaging. Protein kinase C phosphorylation is stimulated by HBx protein and may play a role in transport of the viral genome to the nucleus at the late step during the viral replication cycle.

It is found in the virion. The protein localises to the host cytoplasm. Self assembles to form an icosahedral capsid. Most capsids appear to be large particles with an icosahedral symmetry of T=4 and consist of 240 copies of capsid protein, though a fraction forms smaller T=3 particles consisting of 180 capsid proteins. Entering capsids are transported along microtubules to the nucleus. Phosphorylation of the capsid is thought to induce exposure of nuclear localization signal in the C-terminal portion of the capsid protein that allows binding to the nuclear pore complex via the importin (karyopherin-) alpha and beta. Capsids are imported in intact form through the nuclear pore into the nuclear basket, where it probably binds NUP153. Only capsids that contain the mature viral genome can release the viral DNA and capsid protein into the nucleoplasm. Immature capsids get stuck in the basket. Capsids encapsulate the pre-genomic RNA and the P protein. Pre-genomic RNA is reverse-transcribed into DNA while the capsid is still in the cytoplasm. The capsid can then either be directed to the nucleus, providing more genomes for transcription, or bud through the endoplasmic reticulum to provide new virions. The chain is Capsid protein from Homo sapiens (Human).